A 263-amino-acid chain; its full sequence is Type III pantothenate kinase (263 aa).

9–16 (DIGNTSIK) contributes to the ATP binding site. Substrate-binding positions include Tyr-103 and 110-113 (GADR). The active-site Proton acceptor is Asp-112. Residue Asp-134 coordinates K(+). Residue Thr-137 coordinates ATP. Thr-190 serves as a coordination point for substrate.

The protein belongs to the type III pantothenate kinase family. In terms of assembly, homodimer. NH4(+) serves as cofactor. Requires K(+) as cofactor.

It is found in the cytoplasm. It catalyses the reaction (R)-pantothenate + ATP = (R)-4'-phosphopantothenate + ADP + H(+). Its pathway is cofactor biosynthesis; coenzyme A biosynthesis; CoA from (R)-pantothenate: step 1/5. In terms of biological role, catalyzes the phosphorylation of pantothenate (Pan), the first step in CoA biosynthesis. This is Type III pantothenate kinase from Desulfovibrio desulfuricans (strain ATCC 27774 / DSM 6949 / MB).